Reading from the N-terminus, the 365-residue chain is Anhydro-N-acetylmuramic acid kinase (365 aa).

9 to 16 contributes to the ATP binding site; it reads GTSLDGVD.

This sequence belongs to the anhydro-N-acetylmuramic acid kinase family.

It catalyses the reaction 1,6-anhydro-N-acetyl-beta-muramate + ATP + H2O = N-acetyl-D-muramate 6-phosphate + ADP + H(+). Its pathway is amino-sugar metabolism; 1,6-anhydro-N-acetylmuramate degradation. The protein operates within cell wall biogenesis; peptidoglycan recycling. Its function is as follows. Catalyzes the specific phosphorylation of 1,6-anhydro-N-acetylmuramic acid (anhMurNAc) with the simultaneous cleavage of the 1,6-anhydro ring, generating MurNAc-6-P. Is required for the utilization of anhMurNAc either imported from the medium or derived from its own cell wall murein, and thus plays a role in cell wall recycling. This chain is Anhydro-N-acetylmuramic acid kinase, found in Zymomonas mobilis subsp. mobilis (strain ATCC 31821 / ZM4 / CP4).